We begin with the raw amino-acid sequence, 436 residues long: 3-ketoacyl-CoA thiolase (436 aa).

The Acyl-thioester intermediate role is filled by C99. Catalysis depends on proton acceptor residues H392 and C422.

This sequence belongs to the thiolase-like superfamily. Thiolase family. Heterotetramer of two alpha chains (FadJ) and two beta chains (FadI).

Its subcellular location is the cytoplasm. The enzyme catalyses an acyl-CoA + acetyl-CoA = a 3-oxoacyl-CoA + CoA. The protein operates within lipid metabolism; fatty acid beta-oxidation. Catalyzes the final step of fatty acid oxidation in which acetyl-CoA is released and the CoA ester of a fatty acid two carbons shorter is formed. This chain is 3-ketoacyl-CoA thiolase, found in Salmonella schwarzengrund (strain CVM19633).